The following is a 381-amino-acid chain: 3-hydroxyisobutyryl-CoA hydrolase, mitochondrial (381 aa).

The transit peptide at 1 to 25 directs the protein to the mitochondrion; it reads MDRLLTISNHIGKNIRQFSTSTEEV. Residues Glu116, Gly141, Glu164, and Asp172 each contribute to the substrate site.

This sequence belongs to the enoyl-CoA hydratase/isomerase family.

Its subcellular location is the mitochondrion. It catalyses the reaction 3-hydroxy-2-methylpropanoyl-CoA + H2O = 3-hydroxy-2-methylpropanoate + CoA + H(+). It functions in the pathway amino-acid degradation; L-valine degradation. Hydrolyzes 3-hydroxyisobutyryl-CoA (HIBYL-CoA), a saline catabolite. This is 3-hydroxyisobutyryl-CoA hydrolase, mitochondrial (hibch) from Dictyostelium discoideum (Social amoeba).